The sequence spans 787 residues: Protein translocase subunit SecA (787 aa).

ATP is bound by residues glutamine 85, 103–107, and aspartate 492; that span reads GEGKT.

The protein belongs to the SecA family. As to quaternary structure, monomer and homodimer. Part of the essential Sec protein translocation apparatus which comprises SecA, SecYEG and auxiliary proteins SecDF. Other proteins may also be involved.

The protein resides in the cell membrane. The protein localises to the cytoplasm. The enzyme catalyses ATP + H2O + cellular proteinSide 1 = ADP + phosphate + cellular proteinSide 2.. In terms of biological role, part of the Sec protein translocase complex. Interacts with the SecYEG preprotein conducting channel. Has a central role in coupling the hydrolysis of ATP to the transfer of proteins into and across the cell membrane, serving as an ATP-driven molecular motor driving the stepwise translocation of polypeptide chains across the membrane. This chain is Protein translocase subunit SecA, found in Lactiplantibacillus plantarum (strain ATCC BAA-793 / NCIMB 8826 / WCFS1) (Lactobacillus plantarum).